The primary structure comprises 271 residues: Formamidopyrimidine-DNA glycosylase (271 aa).

Pro-2 (schiff-base intermediate with DNA) is an active-site residue. Glu-3 (proton donor) is an active-site residue. Residue Lys-58 is the Proton donor; for beta-elimination activity of the active site. DNA-binding residues include His-92, Arg-111, and Lys-152. The FPG-type zinc finger occupies 237–271; sequence YVYGKVQKPCKICNNTITLIRQNGRSTYFCNACQN. The Proton donor; for delta-elimination activity role is filled by Arg-261.

This sequence belongs to the FPG family. As to quaternary structure, monomer. Requires Zn(2+) as cofactor.

The catalysed reaction is Hydrolysis of DNA containing ring-opened 7-methylguanine residues, releasing 2,6-diamino-4-hydroxy-5-(N-methyl)formamidopyrimidine.. It catalyses the reaction 2'-deoxyribonucleotide-(2'-deoxyribose 5'-phosphate)-2'-deoxyribonucleotide-DNA = a 3'-end 2'-deoxyribonucleotide-(2,3-dehydro-2,3-deoxyribose 5'-phosphate)-DNA + a 5'-end 5'-phospho-2'-deoxyribonucleoside-DNA + H(+). Its function is as follows. Involved in base excision repair of DNA damaged by oxidation or by mutagenic agents. Acts as a DNA glycosylase that recognizes and removes damaged bases. Has a preference for oxidized purines, such as 7,8-dihydro-8-oxoguanine (8-oxoG). Has AP (apurinic/apyrimidinic) lyase activity and introduces nicks in the DNA strand. Cleaves the DNA backbone by beta-delta elimination to generate a single-strand break at the site of the removed base with both 3'- and 5'-phosphates. The sequence is that of Formamidopyrimidine-DNA glycosylase from Wolbachia sp. subsp. Brugia malayi (strain TRS).